A 577-amino-acid chain; its full sequence is Proline--tRNA ligase (577 aa).

This sequence belongs to the class-II aminoacyl-tRNA synthetase family. ProS type 1 subfamily. In terms of assembly, homodimer.

The protein resides in the cytoplasm. The catalysed reaction is tRNA(Pro) + L-proline + ATP = L-prolyl-tRNA(Pro) + AMP + diphosphate. Catalyzes the attachment of proline to tRNA(Pro) in a two-step reaction: proline is first activated by ATP to form Pro-AMP and then transferred to the acceptor end of tRNA(Pro). As ProRS can inadvertently accommodate and process non-cognate amino acids such as alanine and cysteine, to avoid such errors it has two additional distinct editing activities against alanine. One activity is designated as 'pretransfer' editing and involves the tRNA(Pro)-independent hydrolysis of activated Ala-AMP. The other activity is designated 'posttransfer' editing and involves deacylation of mischarged Ala-tRNA(Pro). The misacylated Cys-tRNA(Pro) is not edited by ProRS. The sequence is that of Proline--tRNA ligase from Marinobacter nauticus (strain ATCC 700491 / DSM 11845 / VT8) (Marinobacter aquaeolei).